Consider the following 364-residue polypeptide: Alpha-2-HS-glycoprotein (364 aa).

A signal peptide (or 17) is located at residues 1-15; sequence MKSFLLLFCLAQLCS. In terms of domain architecture, Cystatin fetuin-A-type 1 spans 27–133; that stretch reads YKEPACDDPD…QFSVLFTKCD (107 aa). 6 disulfides stabilise this stretch: cysteine 32-cysteine 355, cysteine 89-cysteine 100, cysteine 114-cysteine 132, cysteine 146-cysteine 149, cysteine 208-cysteine 219, and cysteine 230-cysteine 248. N-linked (GlcNAc...) asparagine glycosylation is present at asparagine 99. Phosphoserine is present on residues serine 134, serine 135, and serine 138. Residues 144-256 enclose the Cystatin fetuin-A-type 2 domain; the sequence is KLCPDCPLLA…TCTLFQTQPV (113 aa). N-linked (GlcNAc...) asparagine glycosylation is found at asparagine 156 and asparagine 176. An O-linked (GalNAc...) serine glycan is attached at serine 301. At threonine 319 the chain carries Phosphothreonine. 4 positions are modified to phosphoserine: serine 321, serine 325, serine 328, and serine 330. An O-linked (GalNAc...) threonine glycan is attached at threonine 339.

It belongs to the fetuin family. Phosphorylated by FAM20C in the extracellular medium.

The protein localises to the secreted. This Ovis aries (Sheep) protein is Alpha-2-HS-glycoprotein (AHSG).